We begin with the raw amino-acid sequence, 2544 residues long: DNA polymerase theta (2544 aa).

A compositionally biased stretch (basic residues) spans 1-13 (MSLPRRSRKRRRS). Residues 1–57 (MSLPRRSRKRRRSSSGSDTFSGDGDSFVSPQLRCGPVLSPPPGLGRGRRLTGTGTNK) are disordered. Positions 14 to 29 (SSGSDTFSGDGDSFVS) are enriched in low complexity. ATP contacts are provided by residues Gln-95 and 114–121 (APTSAGKT). The 185-residue stretch at 101–285 (LGHVLEGKNL…WLNAELYHTD (185 aa)) folds into the Helicase ATP-binding domain. Residues 101 to 551 (LGHVLEGKNL…STSQDMQTYA (451 aa)) are helicase activity. Residues 215–218 (DELH) carry the DEAH box motif. One can recognise a Helicase C-terminal domain in the interval 320 to 551 (GDEDHIVSLC…STSQDMQTYA (232 aa)). The tract at residues 844–890 (DEEEEAAEERRSMRTIWVTGKGLSAREAAALIVEEAKMILQQDLIEM) is interaction with RAD51. The tract at residues 896–955 (PKSPLSSSTHSRTSTSEVKEHTFKSQTKSSHKRLASMGRNSIRASGSNDKPSPDAERGID) is disordered. Residues 898-911 (SPLSSSTHSRTSTS) are compositionally biased toward low complexity. Residues 933–945 (GRNSIRASGSNDK) show a composition bias toward polar residues. A compositionally biased stretch (basic and acidic residues) spans 946 to 955 (PSPDAERGID). An N6-acetyllysine modification is found at Lys-983. Polar residues predominate over residues 1022 to 1034 (LSFSSEQVNNTLP). 2 disordered regions span residues 1022 to 1058 (LSFSSEQVNNTLPSGRDRKYQKKSWGSSPVRDSGMHR) and 1128 to 1167 (VGHPAAGSSPAAARDRRGLAARETEKGNEALTENGGESQL). A compositionally biased stretch (low complexity) spans 1128-1139 (VGHPAAGSSPAA). Positions 1140–1155 (ARDRRGLAARETEKGN) are enriched in basic and acidic residues. Ser-1265 carries the post-translational modification Phosphoserine. 2 disordered regions span residues 1266–1288 (GVQGKTGAHATNRTEHSHASNPA) and 1331–1353 (QNKCHSTPGDQHVPGAANTDHVD). Phosphoserine is present on residues Ser-1438, Ser-1442, Ser-1444, and Ser-1449. A disordered region spans residues 1478-1501 (FSNPPHPQEDPVMTPTVSEPQGTQ). The segment covering 1492–1501 (PTVSEPQGTQ) has biased composition (polar residues). Residues Ser-1511, Ser-1519, Ser-1585, and Ser-1592 each carry the phosphoserine modification. Residues 1557 to 1591 (ECPQGKLVRGDQNEGSPKPKLTETNQDNSFTWSGA) form a disordered region. Residues 1578-1591 (TETNQDNSFTWSGA) show a composition bias toward polar residues. Composition is skewed to basic and acidic residues over residues 1606-1616 (VSSPRENEKPK) and 1628-1638 (NSKESHEREEI). Residues 1606 to 1697 (VSSPRENEKP…GLIPPTPVPA (92 aa)) form a disordered region. Positions 1641-1652 (DLGTVQRTSVFP) are enriched in polar residues. Over residues 1656–1667 (VKNRTEGLESKA) the composition is skewed to basic and acidic residues. Thr-1710 is subject to Phosphothreonine. The DNA polymerase activity stretch occupies residues 2052-2538 (AECESQKHVM…KVKIGASWGE (487 aa)). 2 loop regions span residues 2097 to 2132 (KLPPNGEMKTQGSKKTLGSTRRGNESGRRMRLGRQF) and 2212 to 2276 (EIKM…VPFP). Over residues 2104-2117 (MKTQGSKKTLGSTR) the composition is skewed to polar residues. The interval 2104-2124 (MKTQGSKKTLGSTRRGNESGR) is disordered. Residue Asp-2284 is the For DNA polymerase activity of the active site. Positions 2284 and 2285 each coordinate Mg(2+). Residues 2445-2489 (QLETFRSTFKSHGHRESMLQNDRTGLLPKRKLKGMFCPMRGGFFI) form a loop 3 region. Asp-2494 contributes to the Mg(2+) binding site.

Belongs to the DNA polymerase type-A family. In terms of assembly, homomultimer; forms homodimers and homotetramers. Interacts with RAD51. Interacts with ORC2 and ORC4. Interacts with RHNO1; interaction takes place during mitosis and promotes POLQ recruitment to DNA damage sites. Interacts (when phosphorylated) with TOPBP1 (via BRCT domains 7 and 8); promoting POLQ recruitment to DNA damage sites. The cofactor is Mg(2+). Phosphorylated by PLK1; promoting interaction with TOPBP1 and recruitment to DNA damage sites.

It localises to the nucleus. Its subcellular location is the chromosome. It catalyses the reaction DNA(n) + a 2'-deoxyribonucleoside 5'-triphosphate = DNA(n+1) + diphosphate. It carries out the reaction ATP + H2O = ADP + phosphate + H(+). In terms of biological role, low-fidelity DNA polymerase with a helicase activity that promotes microhomology-mediated end-joining (MMEJ), an alternative non-homologous end-joining (NHEJ) machinery required to repair double-strand breaks in DNA during mitosis. MMEJ is an error-prone repair pathway that produces deletions of sequences from the strand being repaired and promotes genomic rearrangements, such as telomere fusions, some of them leading to cellular transformation. MMEJ is required during mitosis to repair persistent double-strand breaks that originate in S-phase. Although error-prone, MMEJ protects against chromosomal instability and tumorigenesis. The polymerase acts by binding directly the 2 ends of resected double-strand breaks, allowing microhomologous sequences in the overhangs to form base pairs. It then extends each strand from the base-paired region using the opposing overhang as a template. Requires partially resected DNA containing 2 to 6 base pairs of microhomology to perform MMEJ. The polymerase lacks proofreading activity and is highly promiscuous: unlike most polymerases, promotes extension of ssDNA and partial ssDNA (pssDNA) substrates. When the ends of a break do not contain terminal microhomology must identify embedded complementary sequences through a scanning step. Also acts as a DNA helicase, promoting dissociation of the replication protein A complex (RPA/RP-A), composed of RPA1, RPA2 and RPA3, from resected double-strand breaks to allow their annealing and subsequent joining by MMEJ. Removal of RPA/RP-A complex proteins prevents RAD51 accumulation at resected ends, thereby inhibiting homology-recombination repair (HR) pathway. Also shows RNA-directed DNA polymerase activity to mediate DNA repair in vitro; however this activity needs additional evidence in vivo. May also have lyase activity. Involved in somatic hypermutation of immunoglobulin genes, a process that requires the activity of DNA polymerases to ultimately introduce mutations at both A/T and C/G base pairs. However, POLQ does not play a major role in somatic hypermutation. POLQ-mediated end joining activity is involved in random integration of exogenous DNA hampers. This is DNA polymerase theta from Mus musculus (Mouse).